Consider the following 168-residue polypeptide: ATP synthase subunit b (168 aa).

The chain crosses the membrane as a helical span at residues 7–26 (FVLSNFIFTLINLWIMYWVL).

Belongs to the ATPase B chain family. In terms of assembly, F-type ATPases have 2 components, F(1) - the catalytic core - and F(0) - the membrane proton channel. F(1) has five subunits: alpha(3), beta(3), gamma(1), delta(1), epsilon(1). F(0) has three main subunits: a(1), b(2) and c(10-14). The alpha and beta chains form an alternating ring which encloses part of the gamma chain. F(1) is attached to F(0) by a central stalk formed by the gamma and epsilon chains, while a peripheral stalk is formed by the delta and b chains.

The protein resides in the cell membrane. Its function is as follows. F(1)F(0) ATP synthase produces ATP from ADP in the presence of a proton or sodium gradient. F-type ATPases consist of two structural domains, F(1) containing the extramembraneous catalytic core and F(0) containing the membrane proton channel, linked together by a central stalk and a peripheral stalk. During catalysis, ATP synthesis in the catalytic domain of F(1) is coupled via a rotary mechanism of the central stalk subunits to proton translocation. In terms of biological role, component of the F(0) channel, it forms part of the peripheral stalk, linking F(1) to F(0). In Alkaliphilus metalliredigens (strain QYMF), this protein is ATP synthase subunit b.